The primary structure comprises 421 residues: Alpha-1-antiproteinase 2 (421 aa).

An N-terminal signal peptide occupies residues Met-1–Ala-24. N-linked (GlcNAc...) asparagine glycans are attached at residues Asn-73, Asn-110, and Asn-274. Residues Gly-376–Arg-395 are RCL.

Belongs to the serpin family. N-glycosylated with carbohydrates having biantennary side chains. Plasma.

It is found in the secreted. Functionally, inhibitor of serine proteases. The protein is Alpha-1-antiproteinase 2 of Equus caballus (Horse).